The primary structure comprises 439 residues: Tubulin beta chain (439 aa).

GTP-binding residues include Q11, E69, S138, G142, T143, G144, N204, and N226. E69 contributes to the Mg(2+) binding site.

This sequence belongs to the tubulin family. As to quaternary structure, dimer of alpha and beta chains. A typical microtubule is a hollow water-filled tube with an outer diameter of 25 nm and an inner diameter of 15 nM. Alpha-beta heterodimers associate head-to-tail to form protofilaments running lengthwise along the microtubule wall with the beta-tubulin subunit facing the microtubule plus end conferring a structural polarity. Microtubules usually have 13 protofilaments but different protofilament numbers can be found in some organisms and specialized cells. Mg(2+) is required as a cofactor.

It localises to the cytoplasm. The protein resides in the cytoskeleton. In terms of biological role, tubulin is the major constituent of microtubules, a cylinder consisting of laterally associated linear protofilaments composed of alpha- and beta-tubulin heterodimers. Microtubules grow by the addition of GTP-tubulin dimers to the microtubule end, where a stabilizing cap forms. Below the cap, tubulin dimers are in GDP-bound state, owing to GTPase activity of alpha-tubulin. In Encephalitozoon intestinalis (Microsporidian parasite), this protein is Tubulin beta chain (TUB2).